A 321-amino-acid polypeptide reads, in one-letter code: Urease accessory protein UreD (321 aa).

Belongs to the UreD family. UreD, UreF and UreG form a complex that acts as a GTP-hydrolysis-dependent molecular chaperone, activating the urease apoprotein by helping to assemble the nickel containing metallocenter of UreC. The UreE protein probably delivers the nickel.

It localises to the cytoplasm. Its function is as follows. Required for maturation of urease via the functional incorporation of the urease nickel metallocenter. In Photorhabdus laumondii subsp. laumondii (strain DSM 15139 / CIP 105565 / TT01) (Photorhabdus luminescens subsp. laumondii), this protein is Urease accessory protein UreD.